The following is a 1070-amino-acid chain: DNA-directed RNA polymerase subunit beta (1070 aa).

The protein belongs to the RNA polymerase beta chain family. In terms of assembly, in plastids the minimal PEP RNA polymerase catalytic core is composed of four subunits: alpha, beta, beta', and beta''. When a (nuclear-encoded) sigma factor is associated with the core the holoenzyme is formed, which can initiate transcription.

The protein localises to the plastid. It localises to the chloroplast. The catalysed reaction is RNA(n) + a ribonucleoside 5'-triphosphate = RNA(n+1) + diphosphate. DNA-dependent RNA polymerase catalyzes the transcription of DNA into RNA using the four ribonucleoside triphosphates as substrates. The sequence is that of DNA-directed RNA polymerase subunit beta from Solanum bulbocastanum (Wild potato).